The sequence spans 147 residues: Sentan (147 aa).

The tract at residues 1–36 (MGGCMHSTWDHALHSRGEPRPSEAPASISAPSKMPK) is disordered. Residues 8-21 (TWDHALHSRGEPRP) are compositionally biased toward basic and acidic residues. Residues 23–32 (EAPASISAPS) show a composition bias toward low complexity.

It belongs to the S-100 family. As to expression, expressed exclusively in ciliated epithelial cells. Detected in ciliated epithelium of trachea and oviduct (at protein level).

It localises to the cell projection. The protein localises to the cilium. Functionally, may be a component of the linker structure that bridges the ciliary membrane and peripheral singlet microtubules. The protein is Sentan (Sntn) of Mus musculus (Mouse).